Consider the following 193-residue polypeptide: NADH-quinone oxidoreductase subunit B (193 aa).

[4Fe-4S] cluster is bound by residues cysteine 72, cysteine 73, cysteine 137, and cysteine 167.

Belongs to the complex I 20 kDa subunit family. As to quaternary structure, NDH-1 is composed of 14 different subunits. Subunits NuoB, C, D, E, F, and G constitute the peripheral sector of the complex. [4Fe-4S] cluster serves as cofactor.

The protein resides in the cell inner membrane. It carries out the reaction a quinone + NADH + 5 H(+)(in) = a quinol + NAD(+) + 4 H(+)(out). In terms of biological role, NDH-1 shuttles electrons from NADH, via FMN and iron-sulfur (Fe-S) centers, to quinones in the respiratory chain. Couples the redox reaction to proton translocation (for every two electrons transferred, four hydrogen ions are translocated across the cytoplasmic membrane), and thus conserves the redox energy in a proton gradient. This Brucella anthropi (strain ATCC 49188 / DSM 6882 / CCUG 24695 / JCM 21032 / LMG 3331 / NBRC 15819 / NCTC 12168 / Alc 37) (Ochrobactrum anthropi) protein is NADH-quinone oxidoreductase subunit B.